An 880-amino-acid chain; its full sequence is Translation initiation factor IF-2 (880 aa).

Basic and acidic residues-rich tracts occupy residues H34 to V43, T59 to K69, R82 to H94, N110 to N131, K167 to E181, Q230 to K240, and E248 to D261. Residues H34–V297 are disordered. Positions K262–N275 are enriched in basic residues. The span at Q276 to L292 shows a compositional bias: basic and acidic residues. Residues K381–K550 enclose the tr-type G domain. Residues G390–T397 form a G1 region. G390 to T397 lines the GTP pocket. Residues G415 to R419 form a G2 region. Positions D436–G439 are G3. GTP-binding positions include D436–H440 and N490–D493. The tract at residues N490–D493 is G4. The interval S526–K528 is G5.

It belongs to the TRAFAC class translation factor GTPase superfamily. Classic translation factor GTPase family. IF-2 subfamily.

It is found in the cytoplasm. Its function is as follows. One of the essential components for the initiation of protein synthesis. Protects formylmethionyl-tRNA from spontaneous hydrolysis and promotes its binding to the 30S ribosomal subunits. Also involved in the hydrolysis of GTP during the formation of the 70S ribosomal complex. In Lactobacillus johnsonii (strain CNCM I-12250 / La1 / NCC 533), this protein is Translation initiation factor IF-2.